Consider the following 433-residue polypeptide: Adenylosuccinate synthetase (433 aa).

GTP-binding positions include 12–18 (GDEGKGK) and 40–42 (GHT). Residue Asp-13 is the Proton acceptor of the active site. 2 residues coordinate Mg(2+): Asp-13 and Gly-40. IMP-binding positions include 13 to 16 (DEGK), 38 to 41 (NAGH), Thr-130, Arg-144, Gln-225, Thr-240, and Arg-304. His-41 acts as the Proton donor in catalysis. 300-306 (ATTGRPR) provides a ligand contact to substrate. Residues Arg-306, 332 to 334 (KLD), and 414 to 416 (SIG) contribute to the GTP site.

This sequence belongs to the adenylosuccinate synthetase family. Homodimer. Mg(2+) serves as cofactor.

Its subcellular location is the cytoplasm. It carries out the reaction IMP + L-aspartate + GTP = N(6)-(1,2-dicarboxyethyl)-AMP + GDP + phosphate + 2 H(+). Its pathway is purine metabolism; AMP biosynthesis via de novo pathway; AMP from IMP: step 1/2. Its function is as follows. Plays an important role in the de novo pathway of purine nucleotide biosynthesis. Catalyzes the first committed step in the biosynthesis of AMP from IMP. This chain is Adenylosuccinate synthetase, found in Geobacter sulfurreducens (strain ATCC 51573 / DSM 12127 / PCA).